The chain runs to 337 residues: Glyceraldehyde-3-phosphate dehydrogenase (337 aa).

Residues 12–13 (RI), Asp-34, and Arg-79 each bind NAD(+). D-glyceraldehyde 3-phosphate contacts are provided by residues 150 to 152 (SCT), Thr-181, 210 to 211 (TG), and Arg-233. Cys-151 (nucleophile) is an active-site residue. NAD(+) is bound at residue Asn-315.

It belongs to the glyceraldehyde-3-phosphate dehydrogenase family. As to quaternary structure, homotetramer.

The protein localises to the cytoplasm. It carries out the reaction D-glyceraldehyde 3-phosphate + phosphate + NAD(+) = (2R)-3-phospho-glyceroyl phosphate + NADH + H(+). Its pathway is carbohydrate degradation; glycolysis; pyruvate from D-glyceraldehyde 3-phosphate: step 1/5. The sequence is that of Glyceraldehyde-3-phosphate dehydrogenase (GPD-1) from Claviceps purpurea (strain 20.1) (Ergot fungus).